A 159-amino-acid chain; its full sequence is Ribose-5-phosphate isomerase B (159 aa).

D-ribulose 5-phosphate contacts are provided by residues 8–9 (DH) and 67–71 (GSGNG). Glu-72 serves as the catalytic Proton acceptor. Catalysis depends on His-99, which acts as the Proton donor. Residues Asn-100, Arg-110, Arg-134, and Arg-138 each coordinate D-ribulose 5-phosphate.

The protein belongs to the LacAB/RpiB family. Homodimer.

The enzyme catalyses aldehydo-D-ribose 5-phosphate = D-ribulose 5-phosphate. It participates in carbohydrate degradation; pentose phosphate pathway; D-ribose 5-phosphate from D-ribulose 5-phosphate (non-oxidative stage): step 1/1. Catalyzes the interconversion of ribulose-5-P and ribose-5-P. This is Ribose-5-phosphate isomerase B from Mycolicibacterium paratuberculosis (strain ATCC BAA-968 / K-10) (Mycobacterium paratuberculosis).